The primary structure comprises 508 residues: Photosystem II CP47 reaction center protein (508 aa).

The next 6 membrane-spanning stretches (helical) occupy residues 21–36 (AVHI…WAGS), 101–115 (ILFS…IWHW), 140–156 (GIHL…FGAF), 203–218 (IAAG…FHLS), 237–252 (VLSS…AFVV), and 457–472 (SFAL…HGAR).

The protein belongs to the PsbB/PsbC family. PsbB subfamily. As to quaternary structure, PSII is composed of 1 copy each of membrane proteins PsbA, PsbB, PsbC, PsbD, PsbE, PsbF, PsbH, PsbI, PsbJ, PsbK, PsbL, PsbM, PsbT, PsbX, PsbY, PsbZ, Psb30/Ycf12, at least 3 peripheral proteins of the oxygen-evolving complex and a large number of cofactors. It forms dimeric complexes. The cofactor is Binds multiple chlorophylls. PSII binds additional chlorophylls, carotenoids and specific lipids..

The protein localises to the plastid. The protein resides in the chloroplast thylakoid membrane. Functionally, one of the components of the core complex of photosystem II (PSII). It binds chlorophyll and helps catalyze the primary light-induced photochemical processes of PSII. PSII is a light-driven water:plastoquinone oxidoreductase, using light energy to abstract electrons from H(2)O, generating O(2) and a proton gradient subsequently used for ATP formation. The protein is Photosystem II CP47 reaction center protein of Oenothera argillicola (Appalachian evening primrose).